The chain runs to 1388 residues: Rho-associated protein kinase 2 (1388 aa).

A disordered region spans residues 1 to 24; sequence MSRPPPTGKMPGAPEAVSGDGAGA. A Protein kinase domain is found at 92–354; it reads YDVVKVIGRG…VEEIKQHPFF (263 aa). Residues 98–106 and Lys121 contribute to the ATP site; that span reads IGRGAFGEV. Asp214 serves as the catalytic Proton acceptor. The AGC-kinase C-terminal domain occupies 357–425; that stretch reads DQWNWDNIRE…YRENLLLSDS (69 aa). Residues 363-784 are interaction with PPP1R12A; that stretch reads NIRETAAPVV…INELLKQKDV (422 aa). The segment at 373 to 420 is interaction with NPM1; it reads PELSSDIDSSNFDDIEDDKGDVETFPIPKAFVGNQLPFIGFTYYRENL. Thr414 carries the post-translational modification Phosphothreonine; by ROCK2. The 77-residue stretch at 497–573 folds into the REM-1 domain; that stretch reads ALRQLEREKA…LDETNALLRT (77 aa). A compositionally biased stretch (basic and acidic residues) spans 512–530; sequence NAEYQRKADHEADKKRNLE. Residues 512–532 are disordered; the sequence is NAEYQRKADHEADKKRNLEND. At Tyr722 the chain carries Phosphotyrosine; by SRC. The region spanning 979–1047 is the RhoBD domain; sequence TSDVANLANE…LAEIMNRKEP (69 aa). The segment at 979-1047 is RHOA binding; it reads TSDVANLANE…LAEIMNRKEP (69 aa). The stretch at 1054-1126 forms a coiled coil; it reads TDMRRKEKEN…EQLRSQLQAL (73 aa). Ser1137 carries the post-translational modification Phosphoserine. One can recognise a PH domain in the interval 1150–1349; the sequence is ESRLEGWLSL…WVSRLVKKIP (200 aa). Thr1212 carries the phosphothreonine modification. Residues 1260–1315 form a Phorbol-ester/DAG-type zinc finger; the sequence is GHEFIPTLYHFPTNCEACMKPLWHMFKPPPALECRRCHIKCHKDHMDKKEEIIAPC. A disordered region spans residues 1345–1388; the sequence is VKKIPKKPPAPDPFARSSPRTSMKIQQNQSIRRPSRQLAANKPS. Phosphoserine is present on residues Ser1362 and Ser1374. Polar residues predominate over residues 1362 to 1376; it reads SPRTSMKIQQNQSIR.

Belongs to the protein kinase superfamily. AGC Ser/Thr protein kinase family. Homodimer. Interacts with IRS1. Interacts with RAF1. Interacts with RHOA (activated by GTP), RHOB and RHOC. Interacts with PPP1R12A. Interacts with EP300. Interacts with CHORDC1. Interacts with BRCA2. Interacts with NPM1; this interaction enhances ROCK2 activity. Interacts with SORL1. Interacts with PJVK. It depends on Mg(2+) as a cofactor. Autophosphorylated. Phosphorylation at Tyr-722 reduces its binding to RHOA and is crucial for focal adhesion dynamics. Dephosphorylation by PTPN11 stimulates its RHOA binding activity. In terms of processing, cleaved by granzyme B during apoptosis. This leads to constitutive activation of the kinase and membrane blebbing.

It localises to the cytoplasm. Its subcellular location is the cell membrane. It is found in the nucleus. The protein resides in the cytoskeleton. The protein localises to the microtubule organizing center. It localises to the centrosome. It carries out the reaction L-seryl-[protein] + ATP = O-phospho-L-seryl-[protein] + ADP + H(+). The catalysed reaction is L-threonyl-[protein] + ATP = O-phospho-L-threonyl-[protein] + ADP + H(+). With respect to regulation, activated by RHOA binding. Inhibited by Y-27632. In terms of biological role, protein kinase which is a key regulator of actin cytoskeleton and cell polarity. Involved in regulation of smooth muscle contraction, actin cytoskeleton organization, stress fiber and focal adhesion formation, neurite retraction, cell adhesion and motility via phosphorylation of ADD1, BRCA2, CNN1, EZR, DPYSL2, EP300, MSN, MYL9/MLC2, NPM1, RDX, PPP1R12A and VIM. Phosphorylates SORL1 and IRF4. Acts as a negative regulator of VEGF-induced angiogenic endothelial cell activation. Positively regulates the activation of p42/MAPK1-p44/MAPK3 and of p90RSK/RPS6KA1 during myogenic differentiation. Plays an important role in the timely initiation of centrosome duplication. Inhibits keratinocyte terminal differentiation. May regulate closure of the eyelids and ventral body wall through organization of actomyosin bundles. Plays a critical role in the regulation of spine and synaptic properties in the hippocampus. Plays an important role in generating the circadian rhythm of the aortic myofilament Ca(2+) sensitivity and vascular contractility by modulating the myosin light chain phosphorylation. This is Rho-associated protein kinase 2 (ROCK2) from Sus scrofa (Pig).